A 79-amino-acid polypeptide reads, in one-letter code: Tungsten-containing formylmethanofuran dehydrogenase 2 subunit G (79 aa).

2 consecutive 4Fe-4S ferredoxin-type domains span residues valine 2 to valine 31 and threonine 51 to threonine 79. 8 residues coordinate [4Fe-4S] cluster: cysteine 11, cysteine 14, cysteine 17, cysteine 21, cysteine 60, cysteine 63, cysteine 66, and cysteine 70.

The cofactor is [4Fe-4S] cluster.

The catalysed reaction is N-formylmethanofuran + 2 oxidized [2Fe-2S]-[ferredoxin] + H2O = methanofuran + 2 reduced [2Fe-2S]-[ferredoxin] + CO2 + H(+). It participates in one-carbon metabolism; methanogenesis from CO(2); 5,10-methenyl-5,6,7,8-tetrahydromethanopterin from CO(2): step 1/3. Its activity is regulated as follows. Not inactivated by cyanide. Functionally, catalyzes the reversible oxidation of CO(2) and methanofuran (MFR) to N-formylmethanofuran (CHO-MFR). This enzyme is oxygen-labile. May function as an electron transfer protein. In Methanopyrus kandleri (strain AV19 / DSM 6324 / JCM 9639 / NBRC 100938), this protein is Tungsten-containing formylmethanofuran dehydrogenase 2 subunit G (fwdG).